A 307-amino-acid chain; its full sequence is Acetaldehyde dehydrogenase (307 aa).

The active-site Acyl-thioester intermediate is the Cys131. NAD(+) contacts are provided by residues 162–170 and Asn273; that span reads SIGPGTRKN.

The protein belongs to the acetaldehyde dehydrogenase family.

It carries out the reaction acetaldehyde + NAD(+) + CoA = acetyl-CoA + NADH + H(+). The sequence is that of Acetaldehyde dehydrogenase (nahO) from Stutzerimonas stutzeri (Pseudomonas stutzeri).